The primary structure comprises 162 residues: MLQKKKYQKKSSKIIINKKAYYNYFIEKVFQSGLVLEGWEIKSIRSGKVNISESYIINDRNEMYLCNCLIEPLQMSSNRFSCDPTRKKKLLLHKNEIDFLSLKKKNTGYTMVSLSLFWKKSWCKLEFGLAKGKTAQDKRINLKKREWEQEKLKILKKTKETY.

This sequence belongs to the SmpB family.

Its subcellular location is the cytoplasm. Functionally, required for rescue of stalled ribosomes mediated by trans-translation. Binds to transfer-messenger RNA (tmRNA), required for stable association of tmRNA with ribosomes. tmRNA and SmpB together mimic tRNA shape, replacing the anticodon stem-loop with SmpB. tmRNA is encoded by the ssrA gene; the 2 termini fold to resemble tRNA(Ala) and it encodes a 'tag peptide', a short internal open reading frame. During trans-translation Ala-aminoacylated tmRNA acts like a tRNA, entering the A-site of stalled ribosomes, displacing the stalled mRNA. The ribosome then switches to translate the ORF on the tmRNA; the nascent peptide is terminated with the 'tag peptide' encoded by the tmRNA and targeted for degradation. The ribosome is freed to recommence translation, which seems to be the essential function of trans-translation. In Buchnera aphidicola subsp. Acyrthosiphon pisum (strain 5A), this protein is SsrA-binding protein.